The sequence spans 1383 residues: DNA-directed RNA polymerase subunit beta (1383 aa).

Belongs to the RNA polymerase beta chain family. As to quaternary structure, the RNAP catalytic core consists of 2 alpha, 1 beta, 1 beta' and 1 omega subunit. When a sigma factor is associated with the core the holoenzyme is formed, which can initiate transcription.

It catalyses the reaction RNA(n) + a ribonucleoside 5'-triphosphate = RNA(n+1) + diphosphate. Its function is as follows. DNA-dependent RNA polymerase catalyzes the transcription of DNA into RNA using the four ribonucleoside triphosphates as substrates. In Xanthomonas euvesicatoria pv. vesicatoria (strain 85-10) (Xanthomonas campestris pv. vesicatoria), this protein is DNA-directed RNA polymerase subunit beta.